The following is a 128-amino-acid chain: Disintegrin gabonin-1 (128 aa).

The signal sequence occupies residues 1–20; that stretch reads MIQVLLVIICLAVFPYQGSS. A propeptide spanning residues 21–47 is cleaved from the precursor; sequence IILESGNVNDYEIVYPKKVTVLPTGAM. Positions 47 to 112 constitute a Disintegrin domain; sequence MNSAHPCCDP…DCPRNPNKGE (66 aa). 4 disulfides stabilise this stretch: Cys-53–Cys-76, Cys-67–Cys-73, Cys-72–Cys-97, and Cys-85–Cys-104. Positions 89–91 match the Cell attachment site motif; sequence RGD. Positions 108 to 128 are disordered; it reads PNKGESDELEWSAAATGSVLM.

It belongs to the disintegrin family. Dimeric disintegrin subfamily. As to quaternary structure, heterodimer with bitisgabonin (bitisgabonin-1 is the name of the heterodimer); disulfide-linked. As to expression, expressed by the venom gland.

It localises to the secreted. Its function is as follows. The heterodimer bitisgabonin-1 is a potent inhibitor of the adhesion of the RGD-dependent integrin alpha-5/beta-1 (ITGA5/ITGB1) to immobilized fibronectin. The protein is Disintegrin gabonin-1 of Bitis gabonica (Gaboon adder).